Reading from the N-terminus, the 192-residue chain is Xanthine phosphoribosyltransferase (192 aa).

L20 and N27 together coordinate xanthine. 128 to 132 (ADGEA) is a binding site for 5-phospho-alpha-D-ribose 1-diphosphate. Residue K156 coordinates xanthine.

It belongs to the purine/pyrimidine phosphoribosyltransferase family. Xpt subfamily. As to quaternary structure, homodimer.

The protein resides in the cytoplasm. It catalyses the reaction XMP + diphosphate = xanthine + 5-phospho-alpha-D-ribose 1-diphosphate. The protein operates within purine metabolism; XMP biosynthesis via salvage pathway; XMP from xanthine: step 1/1. Converts the preformed base xanthine, a product of nucleic acid breakdown, to xanthosine 5'-monophosphate (XMP), so it can be reused for RNA or DNA synthesis. This Agathobacter rectalis (strain ATCC 33656 / DSM 3377 / JCM 17463 / KCTC 5835 / VPI 0990) (Eubacterium rectale) protein is Xanthine phosphoribosyltransferase.